The chain runs to 471 residues: Dynein regulatory complex subunit 4 (471 aa).

The interval methionine 1–glycine 24 is disordered. Coiled-coil stretches lie at residues glutamate 23–isoleucine 239 and leucine 282–lysine 425.

It belongs to the DRC4 family. In terms of assembly, component of the nexin-dynein regulatory complex (N-DRC). Interacts with DRC1, DRC2 and DRC5.

It is found in the cytoplasm. The protein localises to the cytoskeleton. The protein resides in the flagellum axoneme. It localises to the flagellum basal body. Functionally, component of the nexin-dynein regulatory complex (N-DRC), a key regulator of ciliary/flagellar motility which maintains the alignment and integrity of the distal axoneme and regulates microtubule sliding in motile axonemes. Plays an important role in the assembly of the N-DRC linker. This chain is Dynein regulatory complex subunit 4, found in Chlamydomonas reinhardtii (Chlamydomonas smithii).